A 398-amino-acid polypeptide reads, in one-letter code: Acetate kinase (398 aa).

Residue Asn-7 participates in Mg(2+) binding. Lys-14 is an ATP binding site. Arg-91 serves as a coordination point for substrate. The active-site Proton donor/acceptor is Asp-148. Residues 208–212, 283–285, and 331–335 contribute to the ATP site; these read HLGNG, DSR, and GIGEN. Glu-384 lines the Mg(2+) pocket.

This sequence belongs to the acetokinase family. In terms of assembly, homodimer. Requires Mg(2+) as cofactor. It depends on Mn(2+) as a cofactor.

It localises to the cytoplasm. The enzyme catalyses acetate + ATP = acetyl phosphate + ADP. Its pathway is metabolic intermediate biosynthesis; acetyl-CoA biosynthesis; acetyl-CoA from acetate: step 1/2. Its function is as follows. Catalyzes the formation of acetyl phosphate from acetate and ATP. Can also catalyze the reverse reaction. The polypeptide is Acetate kinase (Halothermothrix orenii (strain H 168 / OCM 544 / DSM 9562)).